A 268-amino-acid chain; its full sequence is Inositol monophosphatase 3 (268 aa).

4 residues coordinate Mg(2+): glutamate 71, aspartate 91, leucine 93, and aspartate 94. Glutamate 71 is a substrate binding site. Substrate is bound by residues 93 to 96 (LDGT), 194 to 196 (GSC), glutamate 213, and aspartate 221. Aspartate 221 is a binding site for Mg(2+).

The protein belongs to the inositol monophosphatase superfamily. It depends on Mg(2+) as a cofactor. In terms of tissue distribution, expressed in the shoot apex, roots, stems, leaves, flowers and young and mature green fruits.

It carries out the reaction a myo-inositol phosphate + H2O = myo-inositol + phosphate. The protein operates within polyol metabolism; myo-inositol biosynthesis; myo-inositol from D-glucose 6-phosphate: step 2/2. Its function is as follows. Responsible for the provision of inositol required for synthesis of phosphatidylinositol and polyphosphoinositides. This Solanum lycopersicum (Tomato) protein is Inositol monophosphatase 3 (IMP3).